A 142-amino-acid chain; its full sequence is Protein-export protein SecB (142 aa).

Belongs to the SecB family. In terms of assembly, homotetramer, a dimer of dimers. One homotetramer interacts with 1 SecA dimer.

The protein localises to the cytoplasm. In terms of biological role, one of the proteins required for the normal export of preproteins out of the cell cytoplasm. It is a molecular chaperone that binds to a subset of precursor proteins, maintaining them in a translocation-competent state. It also specifically binds to its receptor SecA. The chain is Protein-export protein SecB from Buchnera aphidicola subsp. Acyrthosiphon pisum (strain 5A).